A 446-amino-acid chain; its full sequence is GRAM domain-containing protein 2B (446 aa).

Methionine 1 is modified (N-acetylmethionine). The disordered stretch occupies residues 1-120; it reads MVKKRLPSND…RKKSSSSSQY (120 aa). A compositionally biased stretch (low complexity) spans 29 to 43; it reads SRSSTDSPSSVFFSS. Over residues 95-113 the composition is skewed to basic and acidic residues; the sequence is DKNDCKTESKNDPKTERKK. One can recognise a GRAM domain in the interval 124 to 191; that stretch reads MHFHKLFLSV…FSVTLIKKTK (68 aa). Over residues 234–247 the composition is skewed to polar residues; the sequence is TSVGNSPNPSSAEN. The segment at 234–253 is disordered; that stretch reads TSVGNSPNPSSAENSFRADR. 3 positions are modified to phosphoserine: serine 239, serine 256, and serine 266. The interval 276-298 is disordered; that stretch reads RQDMEGYSSSGSQTPESENSRDF. The span at 282-292 shows a compositional bias: polar residues; that stretch reads YSSSGSQTPES.

In Pongo abelii (Sumatran orangutan), this protein is GRAM domain-containing protein 2B (GRAMD2B).